The primary structure comprises 553 residues: Chaperonin GroEL 2 (553 aa).

Residues 29 to 32 (TLGP), 86 to 90 (DGTTT), Gly-414, and Asp-495 each bind ATP.

This sequence belongs to the chaperonin (HSP60) family. As to quaternary structure, forms a cylinder of 14 subunits composed of two heptameric rings stacked back-to-back. Interacts with the co-chaperonin GroES.

The protein resides in the cytoplasm. The enzyme catalyses ATP + H2O + a folded polypeptide = ADP + phosphate + an unfolded polypeptide.. Functionally, together with its co-chaperonin GroES, plays an essential role in assisting protein folding. The GroEL-GroES system forms a nano-cage that allows encapsulation of the non-native substrate proteins and provides a physical environment optimized to promote and accelerate protein folding. The sequence is that of Chaperonin GroEL 2 from Gloeobacter violaceus (strain ATCC 29082 / PCC 7421).